Here is a 959-residue protein sequence, read N- to C-terminus: Protovillin (959 aa).

A tail region spans residues M1–I53. The interval G54–T832 is core. Gelsolin-like repeat units follow at residues S64 to T116, I204 to G244, I309 to T366, R479 to G529, I603 to A647, and F713 to L754. Repeat copies occupy residues T840–V849 and T851–V860. A 2 X 10 AA repeats of T-P-K-P-I-T-T-P-T-V region spans residues T840–V860. An HP domain is found at T895–F959.

This sequence belongs to the villin/gelsolin family.

It is found in the cytoplasm. The protein resides in the cytoskeleton. Caps actin filaments but displays neither severing nor cross-linking nor nucleating activities. Protovillin seems to be a villin precursor with only archaic capping activity. It lacks essential changes in the sequence to allow bundling of actin filaments and consequently the appearance of microvilli. The polypeptide is Protovillin (vilB) (Dictyostelium discoideum (Social amoeba)).